The chain runs to 385 residues: Guanine nucleotide-binding protein alpha-5 subunit (385 aa).

Glycine 2 carries N-myristoyl glycine lipidation. Residue cysteine 6 is the site of S-palmitoyl cysteine attachment. Residues 32-385 (RKIKMLLLGI…NKNIETLSLE (354 aa)) form the G-alpha domain. The G1 motif stretch occupies residues 35 to 48 (KMLLLGISDSGKST). GTP contacts are provided by residues 40–47 (GISDSGKS), 174–180 (IHMRQTT), 199–203 (DVGGQ), 298–301 (NKID), and alanine 357. Mg(2+) is bound by residues serine 47 and threonine 180. Positions 172-180 (DLIHMRQTT) are G2 motif. The G3 motif stretch occupies residues 195–204 (IRLIDVGGQK). The tract at residues 294–301 (MLFLNKID) is G4 motif. Positions 355 to 360 (TQATIT) are G5 motif.

It belongs to the G-alpha family. As to quaternary structure, g proteins are composed of 3 units; alpha, beta and gamma. The alpha chain contains the guanine nucleotide binding site.

Guanine nucleotide-binding proteins (G proteins) are involved as modulators or transducers in various transmembrane signaling systems. The chain is Guanine nucleotide-binding protein alpha-5 subunit (gpa-5) from Caenorhabditis briggsae.